The primary structure comprises 169 residues: Chorismate pyruvate-lyase (169 aa).

Residues methionine 35, arginine 77, leucine 115, and glutamate 156 each contribute to the substrate site.

It belongs to the UbiC family. As to quaternary structure, monomer.

It is found in the cytoplasm. It carries out the reaction chorismate = 4-hydroxybenzoate + pyruvate. The protein operates within cofactor biosynthesis; ubiquinone biosynthesis. Its function is as follows. Removes the pyruvyl group from chorismate, with concomitant aromatization of the ring, to provide 4-hydroxybenzoate (4HB) for the ubiquinone pathway. In Cronobacter sakazakii (strain ATCC BAA-894) (Enterobacter sakazakii), this protein is Chorismate pyruvate-lyase.